The following is a 523-amino-acid chain: MSLERSTSPNPTERTSLLSDTASTISSRDDVEQSSLKQRRTPIPTGQLGGKVSMHSIIINAEGHLWPYINQFVNDIGVSDGNPRNVGFYSGLIESVFACGEVCSIFMLSRLSDRIGRRPVLLPSALGIAVFTALFGLSSSFTMMLTLRVCAGLLAGATPIVHSIVSELTDDTNNALVVPLYGLITPIGFAIGPLIGGTLEHAATKYPNVFGYELFRKYPYFLPSFVPCCMAIVGVTFGYFFLKETLPSLVKSKKRLERQRSSSSISSENSTLYGATEHIRDSTEETAADEEPDSKPKGITELIRDPSIRAIMASGTFLMFLYTSSDVIFSLYCFTAVEDGGVGLPPEKIGYAFSVAGLIAMLMQLCITPWVLRTFDKAKVYHFCMCSFPLVFALMGCLNPLAQTGYSEINKTLHPTTTGLLYAAIAILLLLARVCVMAFPISMMLVKQTADKHSLATANGLVQVAMTLARAFCPTISSSVFAYSTSHNILGGHFWVVVMVFISLVGVWQSTKIARVTKTKEQL.

Over residues 1–26 (MSLERSTSPNPTERTSLLSDTASTIS) the composition is skewed to polar residues. The tract at residues 1-45 (MSLERSTSPNPTERTSLLSDTASTISSRDDVEQSSLKQRRTPIPT) is disordered. The next 5 membrane-spanning stretches (helical) occupy residues 88–108 (FYSGLIESVFACGEVCSIFML), 125–145 (ALGIAVFTALFGLSSSFTMML), 149–169 (VCAGLLAGATPIVHSIVSELT), 175–195 (ALVVPLYGLITPIGFAIGPLI), and 221–241 (FLPSFVPCCMAIVGVTFGYFF). The N-linked (GlcNAc...) asparagine glycan is linked to asparagine 269. 3 helical membrane passes run 317–337 (FLMFLYTSSDVIFSLYCFTAV), 352–372 (AFSVAGLIAMLMQLCITPWVL), and 382–402 (HFCMCSFPLVFALMGCLNPLA). The N-linked (GlcNAc...) asparagine glycan is linked to asparagine 410. The next 3 helical transmembrane spans lie at 419 to 439 (GLLYAAIAILLLLARVCVMAF), 455 to 474 (LATANGLVQVAMTLARAFCP), and 488 to 508 (NILGGHFWVVVMVFISLVGVW).

The protein belongs to the major facilitator superfamily. TCR/Tet family.

The protein localises to the membrane. In terms of biological role, major facilitator-type transporter; part of the gene cluster that mediates the biosynthesis of psilocybin, a psychotropic tryptamine-derived natural product. In Psilocybe cubensis (Psychedelic mushroom), this protein is Major facilitator-type transporter psiT2.